A 189-amino-acid polypeptide reads, in one-letter code: MSIKSDKWIRRMAEEHKMIEPFVPDQVRASEDGRRIVSYGTSSYGYDIRCADEFKIFTNINSTIVDPKNFDEGSFVDFKGDVCIIPPNSFALARTVEYFRIPRTVLTVCLGKSTYARCGIIVNVTPFEPEWEGYVTLEFSNTTPLPAKIYANEGVAQVLFFESDEVCDVSYADRGGKYQGQRGVTLPKT.

DCTP is bound by residues 112–117, 136–138, glutamine 157, tyrosine 171, and glutamine 181; these read KSTYAR and TLE. Glutamate 138 acts as the Proton donor/acceptor in catalysis.

The protein belongs to the dCTP deaminase family. Homotrimer.

It catalyses the reaction dCTP + H2O + H(+) = dUTP + NH4(+). The protein operates within pyrimidine metabolism; dUMP biosynthesis; dUMP from dCTP (dUTP route): step 1/2. Catalyzes the deamination of dCTP to dUTP. This is dCTP deaminase from Burkholderia orbicola (strain MC0-3).